Reading from the N-terminus, the 240-residue chain is Probable septum site-determining protein MinC (240 aa).

The protein belongs to the MinC family. In terms of assembly, interacts with MinD and FtsZ.

Cell division inhibitor that blocks the formation of polar Z ring septums. Rapidly oscillates between the poles of the cell to destabilize FtsZ filaments that have formed before they mature into polar Z rings. Prevents FtsZ polymerization. This Aeromonas hydrophila subsp. hydrophila (strain ATCC 7966 / DSM 30187 / BCRC 13018 / CCUG 14551 / JCM 1027 / KCTC 2358 / NCIMB 9240 / NCTC 8049) protein is Probable septum site-determining protein MinC.